The chain runs to 161 residues: Nucleotide-binding protein Bamb_2603 (161 aa).

Belongs to the YajQ family.

Nucleotide-binding protein. The polypeptide is Nucleotide-binding protein Bamb_2603 (Burkholderia ambifaria (strain ATCC BAA-244 / DSM 16087 / CCUG 44356 / LMG 19182 / AMMD) (Burkholderia cepacia (strain AMMD))).